Reading from the N-terminus, the 152-residue chain is Transcriptional repressor NrdR (152 aa).

Residues 3–34 (CPYCQHPDSDVIDTRKLHNGETIRRRRKCEAC) fold into a zinc finger. The ATP-cone domain occupies 49–139 (ITVVKKNGER…VYRSFADIGK (91 aa)).

Belongs to the NrdR family. The cofactor is Zn(2+).

In terms of biological role, negatively regulates transcription of bacterial ribonucleotide reductase nrd genes and operons by binding to NrdR-boxes. This is Transcriptional repressor NrdR from Roseiflexus castenholzii (strain DSM 13941 / HLO8).